The following is a 1486-amino-acid chain: Glutamate synthase [NADPH] large chain (1486 aa).

The propeptide occupies 1-11 (MLYDKSLERDN). Cysteine 12 acts as the Nucleophile in catalysis. Residues 12–402 (CGFGLIAHIE…PGELMVIDTR (391 aa)) enclose the Glutamine amidotransferase type-2 domain. 1049–1101 (LVETQQALVANGLRHKIRLQVDGGLKTGVDIIKAAILGAESFGFGTGPMVALG) provides a ligand contact to FMN. 3 residues coordinate [3Fe-4S] cluster: cysteine 1102, cysteine 1108, and cysteine 1113.

Belongs to the glutamate synthase family. Aggregate of 4 catalytic active heterodimers, consisting of a large and a small subunit. It depends on [3Fe-4S] cluster as a cofactor. FAD is required as a cofactor. Requires FMN as cofactor.

It catalyses the reaction 2 L-glutamate + NADP(+) = L-glutamine + 2-oxoglutarate + NADPH + H(+). It functions in the pathway amino-acid biosynthesis; L-glutamate biosynthesis via GLT pathway; L-glutamate from 2-oxoglutarate and L-glutamine (NADP(+) route): step 1/1. It participates in energy metabolism; nitrogen metabolism. Functionally, catalyzes the conversion of L-glutamine and 2-oxoglutarate into two molecules of L-glutamate. This is Glutamate synthase [NADPH] large chain (gltB) from Escherichia coli (strain K12).